Consider the following 139-residue polypeptide: Large ribosomal subunit protein uL16 (139 aa).

Belongs to the universal ribosomal protein uL16 family. As to quaternary structure, part of the 50S ribosomal subunit.

Its function is as follows. Binds 23S rRNA and is also seen to make contacts with the A and possibly P site tRNAs. This Prosthecochloris aestuarii (strain DSM 271 / SK 413) protein is Large ribosomal subunit protein uL16.